The sequence spans 93 residues: Small ribosomal subunit protein uS19 (93 aa).

Residues 72–93 form a disordered region; the sequence is GEFSPTRTYRGHNKKDKKMQKK. A compositionally biased stretch (basic residues) spans 80-93; it reads YRGHNKKDKKMQKK.

It belongs to the universal ribosomal protein uS19 family.

Its function is as follows. Protein S19 forms a complex with S13 that binds strongly to the 16S ribosomal RNA. This chain is Small ribosomal subunit protein uS19, found in Aster yellows witches'-broom phytoplasma (strain AYWB).